Here is a 456-residue protein sequence, read N- to C-terminus: Bifunctional protein GlmU (456 aa).

Residues 1 to 230 are pyrophosphorylase; sequence MDKRFAVVLA…FQETLGVNDR (230 aa). UDP-N-acetyl-alpha-D-glucosamine is bound by residues 9 to 12, Lys23, Gln73, and 78 to 79; these read LAAG and GT. Residue Asp103 participates in Mg(2+) binding. UDP-N-acetyl-alpha-D-glucosamine contacts are provided by Gly140, Glu155, Asn170, and Asn228. Position 228 (Asn228) interacts with Mg(2+). The interval 231–251 is linker; that stretch reads VALSQAEQFMKERINKRHMQN. Positions 252–456 are N-acetyltransferase; it reads GVTLIDPMNT…DDYVKNIHKK (205 aa). UDP-N-acetyl-alpha-D-glucosamine-binding residues include Arg333 and Lys351. His363 (proton acceptor) is an active-site residue. Positions 366 and 377 each coordinate UDP-N-acetyl-alpha-D-glucosamine. Acetyl-CoA is bound by residues 386-387, Ala423, and Arg440; that span reads NY.

The protein in the N-terminal section; belongs to the N-acetylglucosamine-1-phosphate uridyltransferase family. In the C-terminal section; belongs to the transferase hexapeptide repeat family. As to quaternary structure, homotrimer. It depends on Mg(2+) as a cofactor.

The protein localises to the cytoplasm. It carries out the reaction alpha-D-glucosamine 1-phosphate + acetyl-CoA = N-acetyl-alpha-D-glucosamine 1-phosphate + CoA + H(+). It catalyses the reaction N-acetyl-alpha-D-glucosamine 1-phosphate + UTP + H(+) = UDP-N-acetyl-alpha-D-glucosamine + diphosphate. Its pathway is nucleotide-sugar biosynthesis; UDP-N-acetyl-alpha-D-glucosamine biosynthesis; N-acetyl-alpha-D-glucosamine 1-phosphate from alpha-D-glucosamine 6-phosphate (route II): step 2/2. It functions in the pathway nucleotide-sugar biosynthesis; UDP-N-acetyl-alpha-D-glucosamine biosynthesis; UDP-N-acetyl-alpha-D-glucosamine from N-acetyl-alpha-D-glucosamine 1-phosphate: step 1/1. It participates in bacterial outer membrane biogenesis; LPS lipid A biosynthesis. In terms of biological role, catalyzes the last two sequential reactions in the de novo biosynthetic pathway for UDP-N-acetylglucosamine (UDP-GlcNAc). The C-terminal domain catalyzes the transfer of acetyl group from acetyl coenzyme A to glucosamine-1-phosphate (GlcN-1-P) to produce N-acetylglucosamine-1-phosphate (GlcNAc-1-P), which is converted into UDP-GlcNAc by the transfer of uridine 5-monophosphate (from uridine 5-triphosphate), a reaction catalyzed by the N-terminal domain. The sequence is that of Bifunctional protein GlmU from Bacillus subtilis (strain 168).